Reading from the N-terminus, the 450-residue chain is Cysteine protease ATG4C (450 aa).

Cys112 acts as the Nucleophile in catalysis. Active-site residues include Asp336 and His338.

This sequence belongs to the peptidase C54 family.

Its subcellular location is the cytoplasm. It catalyses the reaction [protein]-C-terminal L-amino acid-glycyl-phosphatidylethanolamide + H2O = [protein]-C-terminal L-amino acid-glycine + a 1,2-diacyl-sn-glycero-3-phosphoethanolamine. Cysteine protease that plays a key role in autophagy by mediating both proteolytic activation and delipidation of ATG8 family proteins. The protease activity is required for proteolytic activation of ATG8 family proteins: cleaves the C-terminal amino acid of ATG8 proteins to reveal a C-terminal glycine. Exposure of the glycine at the C-terminus is essential for ATG8 proteins conjugation to phosphatidylethanolamine (PE) and insertion to membranes, which is necessary for autophagy. In addition to the protease activity, also mediates delipidation of ATG8 family proteins. Catalyzes delipidation of PE-conjugated forms of ATG8 proteins during macroautophagy. This Xenopus laevis (African clawed frog) protein is Cysteine protease ATG4C.